The following is a 657-amino-acid chain: UvrABC system protein B (657 aa).

Residues 24-409 enclose the Helicase ATP-binding domain; that stretch reads AGVRNQVKSQ…SGHIVQQIIR (386 aa). Residue 37 to 44 coordinates ATP; it reads GTTGSGKT. The Beta-hairpin motif lies at 90 to 113; it reads YYDYYQPEAYIARSDTYIEKSLLI. The region spanning 426–589 is the Helicase C-terminal domain; the sequence is QVDDLLEEIR…IVPKPIIKAI (164 aa). The region spanning 617–652 is the UVR domain; it reads EEQIKKYEALMQRAAKEFRFNEAAKYRDAMQACKEQ.

The protein belongs to the UvrB family. In terms of assembly, forms a heterotetramer with UvrA during the search for lesions. Interacts with UvrC in an incision complex.

It localises to the cytoplasm. Functionally, the UvrABC repair system catalyzes the recognition and processing of DNA lesions. A damage recognition complex composed of 2 UvrA and 2 UvrB subunits scans DNA for abnormalities. Upon binding of the UvrA(2)B(2) complex to a putative damaged site, the DNA wraps around one UvrB monomer. DNA wrap is dependent on ATP binding by UvrB and probably causes local melting of the DNA helix, facilitating insertion of UvrB beta-hairpin between the DNA strands. Then UvrB probes one DNA strand for the presence of a lesion. If a lesion is found the UvrA subunits dissociate and the UvrB-DNA preincision complex is formed. This complex is subsequently bound by UvrC and the second UvrB is released. If no lesion is found, the DNA wraps around the other UvrB subunit that will check the other stand for damage. This Chlamydia pneumoniae (Chlamydophila pneumoniae) protein is UvrABC system protein B.